The chain runs to 1422 residues: YEATS domain-containing protein 2 (1422 aa).

Lys9 is covalently cross-linked (Glycyl lysine isopeptide (Lys-Gly) (interchain with G-Cter in SUMO2)). Residues 47–80 adopt a coiled-coil conformation; sequence KEQFALEMKNKEHEIEVIDQRLIEARRMMDKLRA. A Glycyl lysine isopeptide (Lys-Gly) (interchain with G-Cter in SUMO2) cross-link involves residue Lys113. The segment at 117–198 is disordered; that stretch reads ESPSRSSSPA…KTEQRNADLT (82 aa). A phosphoserine mark is found at Ser118, Ser120, and Ser157. Positions 119 to 148 are enriched in polar residues; that stretch reads PSRSSSPANQRAETPSANHSESDSLSQHND. Basic and acidic residues predominate over residues 149–165; that stretch reads FLSDKDNNSNMDIEERL. Positions 166–176 are enriched in polar residues; the sequence is SNNMEQRPSRN. A compositionally biased stretch (basic and acidic residues) spans 177 to 198; it reads TGRDTSRITGSHKTEQRNADLT. A Glycyl lysine isopeptide (Lys-Gly) (interchain with G-Cter in SUMO2) cross-link involves residue Lys189. The YEATS domain occupies 200-345; the sequence is ETSRLFVKKT…EDCIYPQSSE (146 aa). 2 histone H3K27cr binding regions span residues 259-261 and 282-284; these read HPS and WGE. A Glycyl lysine isopeptide (Lys-Gly) (interchain with G-Cter in SUMO2) cross-link involves residue Lys370. The residue at position 407 (Thr407) is a Phosphothreonine. Phosphoserine occurs at positions 447, 463, 465, 471, and 473. The interval 465–486 is disordered; sequence SPISTPSPSPLPRTPTSTPVHV. Phosphothreonine is present on Thr478. Lys487 is covalently cross-linked (Glycyl lysine isopeptide (Lys-Gly) (interchain with G-Cter in SUMO2)). Over residues 513–535 the composition is skewed to polar residues; it reads TTPSTGSPTNKISTASQVSQGTG. The segment at 513–540 is disordered; sequence TTPSTGSPTNKISTASQVSQGTGSPVPK. A Phosphoserine modification is found at Ser536. Lys552 is covalently cross-linked (Glycyl lysine isopeptide (Lys-Gly) (interchain with G-Cter in SUMO2)). Ser575 is subject to Phosphoserine. Lys592 participates in a covalent cross-link: Glycyl lysine isopeptide (Lys-Gly) (interchain with G-Cter in SUMO2). At Ser627 the chain carries Phosphoserine. Residues Lys649 and Lys773 each participate in a glycyl lysine isopeptide (Lys-Gly) (interchain with G-Cter in SUMO2) cross-link. The segment at 794–842 is disordered; sequence GSAASGGSGAGGGGGGGGGGGSGSGGGGSTGGGGGTAGGGTQSTAGPGG. Gly residues predominate over residues 797-842; that stretch reads ASGGSGAGGGGGGGGGGGSGSGGGGSTGGGGGTAGGGTQSTAGPGG. Residue Lys923 forms a Glycyl lysine isopeptide (Lys-Gly) (interchain with G-Cter in SUMO2) linkage. Lys1110 is covalently cross-linked (Glycyl lysine isopeptide (Lys-Gly) (interchain with G-Cter in SUMO1); alternate). Lys1110 is covalently cross-linked (Glycyl lysine isopeptide (Lys-Gly) (interchain with G-Cter in SUMO2); alternate). A Glycyl lysine isopeptide (Lys-Gly) (interchain with G-Cter in SUMO2) cross-link involves residue Lys1130. Residue Thr1219 is modified to Phosphothreonine. Glycyl lysine isopeptide (Lys-Gly) (interchain with G-Cter in SUMO2) cross-links involve residues Lys1222 and Lys1285.

In terms of assembly, component of the ADA2A-containing complex (ATAC), composed of KAT14, KAT2A, TADA2L, TADA3L, ZZ3, MBIP, WDR5, YEATS2, SGF29 and DR1.

It localises to the nucleus. Chromatin reader component of the ATAC complex, a complex with histone acetyltransferase activity on histones H3 and H4. YEATS2 specifically recognizes and binds histone H3 crotonylated at 'Lys-27' (H3K27cr). Crotonylation marks active promoters and enhancers and confers resistance to transcriptional repressors. The chain is YEATS domain-containing protein 2 from Homo sapiens (Human).